The sequence spans 85 residues: Putative regulatory protein THEYE_A0405 (85 aa).

It belongs to the RemA family.

The sequence is that of Putative regulatory protein THEYE_A0405 from Thermodesulfovibrio yellowstonii (strain ATCC 51303 / DSM 11347 / YP87).